The primary structure comprises 123 residues: Small ribosomal subunit protein uS11 (123 aa).

It belongs to the universal ribosomal protein uS11 family. In terms of assembly, part of the 30S ribosomal subunit. Interacts with proteins S7 and S18. Binds to IF-3.

Located on the platform of the 30S subunit, it bridges several disparate RNA helices of the 16S rRNA. Forms part of the Shine-Dalgarno cleft in the 70S ribosome. The chain is Small ribosomal subunit protein uS11 from Coxiella burnetii (strain CbuG_Q212) (Coxiella burnetii (strain Q212)).